The sequence spans 161 residues: Allophycocyanin beta chain (161 aa).

An N4-methylasparagine modification is found at N71. A (2R,3E)-phycocyanobilin-binding site is contributed by C81.

Belongs to the phycobiliprotein family. As to quaternary structure, heterodimer of an alpha and a beta chain. Contains one covalently linked phycocyanobilin chromophore.

It is found in the cellular thylakoid membrane. Light-harvesting photosynthetic bile pigment-protein from the phycobiliprotein complex. Allophycocyanin has a maximum absorption at approximately 650 nanometers. The chain is Allophycocyanin beta chain (apcB) from Thermosynechococcus vestitus (strain NIES-2133 / IAM M-273 / BP-1).